Consider the following 511-residue polypeptide: Cysteine--tRNA ligase 2, cytoplasmic (511 aa).

Zn(2+) is bound at residue cysteine 34. The 'HIGH' region motif lies at 36-46 (ITAYDFSHIGH). Zn(2+)-binding residues include cysteine 214, histidine 239, and glutamate 243. A 'KMSKS' region motif is present at residues 271–275 (KMAKS). Position 274 (lysine 274) interacts with ATP. TPR repeat units follow at residues 315-348 (ESSSEALYYVYQTLQDLDEGLSPYQDALSEDGGK) and 368-401 (SKMLDDLNTAHILTGAYQDALKFINASLSKLKKM).

It belongs to the class-I aminoacyl-tRNA synthetase family. The cofactor is Zn(2+).

It localises to the cytoplasm. It is found in the cytosol. It catalyses the reaction tRNA(Cys) + L-cysteine + ATP = L-cysteinyl-tRNA(Cys) + AMP + diphosphate. The protein is Cysteine--tRNA ligase 2, cytoplasmic of Arabidopsis thaliana (Mouse-ear cress).